The following is a 518-amino-acid chain: Membrane-bound lytic murein transglycosylase F (518 aa).

Positions 1-21 (MKKLKINYLFIGILALLLAVA) are cleaved as a signal peptide. The non-LT domain stretch occupies residues 22-269 (LWPSIPWFGK…RIEEKYLGHG (248 aa)). The interval 270 to 518 (DDFDYVDTRT…SRKGSEEKQN (249 aa)) is LT domain. Glutamate 314 is a catalytic residue.

In the N-terminal section; belongs to the bacterial solute-binding protein 3 family. It in the C-terminal section; belongs to the transglycosylase Slt family.

The protein resides in the cell outer membrane. It catalyses the reaction Exolytic cleavage of the (1-&gt;4)-beta-glycosidic linkage between N-acetylmuramic acid (MurNAc) and N-acetylglucosamine (GlcNAc) residues in peptidoglycan, from either the reducing or the non-reducing ends of the peptidoglycan chains, with concomitant formation of a 1,6-anhydrobond in the MurNAc residue.. Its function is as follows. Murein-degrading enzyme that degrades murein glycan strands and insoluble, high-molecular weight murein sacculi, with the concomitant formation of a 1,6-anhydromuramoyl product. Lytic transglycosylases (LTs) play an integral role in the metabolism of the peptidoglycan (PG) sacculus. Their lytic action creates space within the PG sacculus to allow for its expansion as well as for the insertion of various structures such as secretion systems and flagella. In Escherichia coli O157:H7, this protein is Membrane-bound lytic murein transglycosylase F.